Consider the following 489-residue polypeptide: 6-phosphogluconate dehydrogenase, decarboxylating 1 (489 aa).

Residues 9–14 (GLAVMG) and 32–34 (NRT) each bind NADP(+). S50 bears the Phosphoserine mark. Residues 74–76 (VKA) and N102 each bind NADP(+). Substrate-binding positions include N102 and 128 to 130 (SGG). K182 (proton acceptor) is an active-site residue. Residue 185–186 (HN) coordinates substrate. E189 serves as the catalytic Proton donor. Positions 190, 259, 286, 446, and 452 each coordinate substrate.

The protein belongs to the 6-phosphogluconate dehydrogenase family. In terms of assembly, homodimer.

It localises to the cytoplasm. It catalyses the reaction 6-phospho-D-gluconate + NADP(+) = D-ribulose 5-phosphate + CO2 + NADPH. Its pathway is carbohydrate degradation; pentose phosphate pathway; D-ribulose 5-phosphate from D-glucose 6-phosphate (oxidative stage): step 3/3. Its function is as follows. Catalyzes the oxidative decarboxylation of 6-phosphogluconate to ribulose 5-phosphate and CO(2), with concomitant reduction of NADP to NADPH. The sequence is that of 6-phosphogluconate dehydrogenase, decarboxylating 1 (GND1) from Saccharomyces cerevisiae (strain ATCC 204508 / S288c) (Baker's yeast).